A 235-amino-acid polypeptide reads, in one-letter code: Sugar fermentation stimulation protein homolog (235 aa).

The protein belongs to the SfsA family.

The polypeptide is Sugar fermentation stimulation protein homolog (Serratia proteamaculans (strain 568)).